The following is a 936-amino-acid chain: Protocadherin gamma-A10 (936 aa).

The N-terminal stretch at 1–32 (MAAQRNRSKESKDCSGLVLLCLFFGIPWEAGA) is a signal peptide. Cadherin domains are found at residues 33-137 (RQIS…APTF), 138-246 (QAEN…APVF), 247-351 (TLPE…SPEL), 352-456 (TITS…PPTF), 457-566 (SQVS…APEI), and 574-687 (DGST…SPAN). Residues 33 to 696 (RQISYSIPEE…NSETSDLTLY (664 aa)) are Extracellular-facing. Asparagine 51 is a glycosylation site (N-linked (GlcNAc...) asparagine). Residues asparagine 423 and asparagine 549 are each glycosylated (N-linked (GlcNAc...) asparagine). Residues 697–717 (LVVAVAAVSCVFLAFVIVLLA) traverse the membrane as a helical segment. The Cytoplasmic segment spans residues 718-936 (LRLRRWHKSR…KKKSGKKEKK (219 aa)). 2 disordered regions span residues 801–845 (SKFP…WPNN) and 906–936 (ATLTNAAGKRDGKAPAGGNGNKKKSGKKEKK). The segment covering 820-845 (WRFSQAQRPGTSGSQNGDDTGTWPNN) has biased composition (polar residues). The segment covering 926–936 (NKKKSGKKEKK) has biased composition (basic residues).

It localises to the cell membrane. In terms of biological role, potential calcium-dependent cell-adhesion protein. May be involved in the establishment and maintenance of specific neuronal connections in the brain. In Pan troglodytes (Chimpanzee), this protein is Protocadherin gamma-A10 (PCDHGA10).